The following is a 160-amino-acid chain: Protein-export protein SecB (160 aa).

This sequence belongs to the SecB family. As to quaternary structure, homotetramer, a dimer of dimers. One homotetramer interacts with 1 SecA dimer.

Its subcellular location is the cytoplasm. In terms of biological role, one of the proteins required for the normal export of preproteins out of the cell cytoplasm. It is a molecular chaperone that binds to a subset of precursor proteins, maintaining them in a translocation-competent state. It also specifically binds to its receptor SecA. This chain is Protein-export protein SecB, found in Burkholderia multivorans (strain ATCC 17616 / 249).